The sequence spans 248 residues: Inner membrane protein pE248R (248 aa).

Gly2 carries the N-myristoyl glycine; by host lipid modification. The Cytoplasmic segment spans residues 2–199; it reads GGSTSKNSFK…ADAISAVFKN (198 aa). A helical transmembrane segment spans residues 200-220; sequence IMVAAVVIVLIIVGFIAVFYF. The Extracellular segment spans residues 221–248; the sequence is LHSRHRHEEEEEAEPLISNKVLKNAAVS.

This sequence belongs to the asfivirus E248R family. As to quaternary structure, interacts with A151R.

The protein localises to the host membrane. The protein resides in the virion membrane. Functionally, essential for viral fusion with host endosomal membrane and core release. The polypeptide is Inner membrane protein pE248R (African swine fever virus (strain Badajoz 1971 Vero-adapted) (Ba71V)).